Reading from the N-terminus, the 196-residue chain is 7-methyl-GTP pyrophosphatase (196 aa).

D72 (proton acceptor) is an active-site residue.

The protein belongs to the Maf family. YceF subfamily. The cofactor is a divalent metal cation.

It is found in the cytoplasm. The catalysed reaction is N(7)-methyl-GTP + H2O = N(7)-methyl-GMP + diphosphate + H(+). Nucleoside triphosphate pyrophosphatase that hydrolyzes 7-methyl-GTP (m(7)GTP). May have a dual role in cell division arrest and in preventing the incorporation of modified nucleotides into cellular nucleic acids. The chain is 7-methyl-GTP pyrophosphatase from Neisseria meningitidis serogroup A / serotype 4A (strain DSM 15465 / Z2491).